The sequence spans 530 residues: UDP-glucuronosyltransferase 2B31 (530 aa).

The N-terminal stretch at 1 to 24 (MSMKWISVLLGLQLSCYFSSGSCG) is a signal peptide. Lys136 bears the N6-succinyllysine mark. The N-linked (GlcNAc...) asparagine glycan is linked to Asn316. The helical transmembrane segment at 495-515 (IGFLLACVATAIFVTTQCCLF) threads the bilayer.

It belongs to the UDP-glycosyltransferase family.

The protein resides in the microsome membrane. The protein localises to the endoplasmic reticulum membrane. It carries out the reaction glucuronate acceptor + UDP-alpha-D-glucuronate = acceptor beta-D-glucuronoside + UDP + H(+). Its function is as follows. UDPGTs are of major importance in the conjugation and subsequent elimination of potentially toxic xenobiotics and endogenous compounds. This isozyme has glucuronidating capacity on phenols, opioids, and carboxylic acid-containing drugs. This chain is UDP-glucuronosyltransferase 2B31 (UGT2B31), found in Canis lupus familiaris (Dog).